The chain runs to 141 residues: Lutropin subunit beta (141 aa).

The first 20 residues, 1–20 (MEMLQGLLLWLLLSVAGVWA), serve as a signal peptide directing secretion. Blocked amino end (Ser) is present on Ser21. Cystine bridges form between Cys29–Cys77, Cys43–Cys92, Cys46–Cys130, Cys54–Cys108, Cys58–Cys110, and Cys113–Cys120. N-linked (GlcNAc...) asparagine glycosylation occurs at Asn33.

The protein belongs to the glycoprotein hormones subunit beta family. As to quaternary structure, heterodimer of a common alpha chain and a unique beta chain which confers biological specificity to thyrotropin, lutropin, follitropin and gonadotropin.

The protein resides in the secreted. Promotes spermatogenesis and ovulation by stimulating the testes and ovaries to synthesize steroids. This chain is Lutropin subunit beta (LHB), found in Sus scrofa (Pig).